Consider the following 622-residue polypeptide: Apical membrane antigen 1 (622 aa).

Positions 1-24 are cleaved as a signal peptide; sequence MRKLYCVLLLSAFEFTYMINFGRG. The Extracellular portion of the chain corresponds to 25–546; the sequence is QNYWEHPYQK…EHKPTYDKMK (522 aa). Disulfide bonds link Cys-149–Cys-302, Cys-217–Cys-247, Cys-263–Cys-275, Cys-320–Cys-418, and Cys-337–Cys-409. Asn-162 carries an N-linked (GlcNAc...) asparagine glycan. N-linked (GlcNAc...) asparagine glycans are attached at residues Asn-286, Asn-371, Asn-421, Asn-422, and Asn-499. 3 disulfide bridges follow: Cys-443–Cys-502, Cys-490–Cys-507, and Cys-492–Cys-509. Residues 547 to 567 form a helical membrane-spanning segment; that stretch reads IIIASSAAVAVLATILMVYLY. At 568-622 the chain is on the cytoplasmic side; that stretch reads KRKGNAEKYDKMDEPQHYGKSNSRNDEMLDPEASFWGEEKRASHTTPVLMEKPYY. Over residues 578–594 the composition is skewed to basic and acidic residues; the sequence is KMDEPQHYGKSNSRNDE. Positions 578–607 are disordered; that stretch reads KMDEPQHYGKSNSRNDEMLDPEASFWGEEK.

This sequence belongs to the apicomplexan parasites AMA1 family.

It is found in the membrane. Involved in parasite invasion of erythrocytes. The chain is Apical membrane antigen 1 (AMA-1) from Plasmodium falciparum (isolate FC27 / Papua New Guinea).